The primary structure comprises 82 residues: ATP synthase subunit c (82 aa).

2 consecutive transmembrane segments (helical) span residues 7–27 and 53–73; these read LVAL…CIGI and FLLA…AMLF.

The protein belongs to the ATPase C chain family. In terms of assembly, F-type ATPases have 2 components, F(1) - the catalytic core - and F(0) - the membrane proton channel. F(1) has five subunits: alpha(3), beta(3), gamma(1), delta(1), epsilon(1). F(0) has three main subunits: a(1), b(2) and c(10-14). The alpha and beta chains form an alternating ring which encloses part of the gamma chain. F(1) is attached to F(0) by a central stalk formed by the gamma and epsilon chains, while a peripheral stalk is formed by the delta and b chains.

It is found in the cell inner membrane. F(1)F(0) ATP synthase produces ATP from ADP in the presence of a proton or sodium gradient. F-type ATPases consist of two structural domains, F(1) containing the extramembraneous catalytic core and F(0) containing the membrane proton channel, linked together by a central stalk and a peripheral stalk. During catalysis, ATP synthesis in the catalytic domain of F(1) is coupled via a rotary mechanism of the central stalk subunits to proton translocation. In terms of biological role, key component of the F(0) channel; it plays a direct role in translocation across the membrane. A homomeric c-ring of between 10-14 subunits forms the central stalk rotor element with the F(1) delta and epsilon subunits. This is ATP synthase subunit c from Leptothrix cholodnii (strain ATCC 51168 / LMG 8142 / SP-6) (Leptothrix discophora (strain SP-6)).